The primary structure comprises 68 residues: Large ribosomal subunit protein bL32 (68 aa).

It belongs to the bacterial ribosomal protein bL32 family.

This Orientia tsutsugamushi (strain Boryong) (Rickettsia tsutsugamushi) protein is Large ribosomal subunit protein bL32.